The primary structure comprises 260 residues: tRNA pseudouridine synthase C (260 aa).

Aspartate 54 is an active-site residue.

It belongs to the pseudouridine synthase RluA family.

It catalyses the reaction uridine(65) in tRNA = pseudouridine(65) in tRNA. Functionally, responsible for synthesis of pseudouridine from uracil-65 in transfer RNAs. This is tRNA pseudouridine synthase C (truC) from Escherichia coli (strain K12).